A 345-amino-acid polypeptide reads, in one-letter code: Alanine racemase (345 aa).

The active-site Proton acceptor; specific for D-alanine is the lysine 33. The residue at position 33 (lysine 33) is an N6-(pyridoxal phosphate)lysine. Arginine 128 serves as a coordination point for substrate. Catalysis depends on tyrosine 242, which acts as the Proton acceptor; specific for L-alanine. Methionine 291 provides a ligand contact to substrate.

This sequence belongs to the alanine racemase family. Requires pyridoxal 5'-phosphate as cofactor.

The catalysed reaction is L-alanine = D-alanine. It participates in amino-acid biosynthesis; D-alanine biosynthesis; D-alanine from L-alanine: step 1/1. In terms of biological role, catalyzes the interconversion of L-alanine and D-alanine. May also act on other amino acids. The protein is Alanine racemase (alr) of Ruegeria sp. (strain TM1040) (Silicibacter sp.).